The chain runs to 1424 residues: ABC multidrug transporter H (1424 aa).

Positions 1–49 (MEDQGHLPSEPRALFDRRDDTDSTNTALDETDLSRTPLQDTSHTPHAED) are disordered. The segment covering 23-42 (STNTALDETDLSRTPLQDTS) has biased composition (polar residues). Asn79 and Asn275 each carry an N-linked (GlcNAc...) asparagine glycan. An ABC transporter 1 domain is found at 96–351 (LSQFNIPQHI…MEEQGFVCRE (256 aa)). The next 7 helical transmembrane spans lie at 488–508 (GLFI…LLAM), 520–540 (VLIK…IAQI), 544–564 (IPVL…MVGL), 569–589 (GAFF…TALF), 605–625 (VSGF…PYHA), 629–649 (WFIW…LLSI), and 710–730 (NFGI…IATS). Residues 760–782 (EEAQLNEKAGHKGTGTDSEAQSN) are disordered. Asn790 and Asn798 each carry an N-linked (GlcNAc...) asparagine glycan. Positions 794 to 1037 (FTWKNLTYTV…VKDYFARYGA (244 aa)) constitute an ABC transporter 2 domain. Residue 830–837 (GSSGAGKT) participates in ATP binding. Transmembrane regions (helical) follow at residues 1131 to 1151 (IALH…IGDS), 1161 to 1181 (TIFN…PLFI), 1200 to 1220 (VAFV…CAVL), and 1240 to 1260 (AIFF…QFIA). N-linked (GlcNAc...) asparagine glycosylation occurs at Asn1265. 2 helical membrane-spanning segments follow: residues 1268–1288 (FAAL…GVLV) and 1300–1320 (WIYW…FSVF). An N-linked (GlcNAc...) asparagine glycan is attached at Asn1338. A helical transmembrane segment spans residues 1395-1415 (TAIVCIFVLSSYALVYALMKL).

It belongs to the ABC transporter superfamily. ABCG family. PDR (TC 3.A.1.205) subfamily.

It localises to the cell membrane. Its activity is regulated as follows. The efflux inhibitor FK506 impairs the transport activity. Functionally, ABC efflux transporter that is able to transport rhodamine 6G (R-6G), a known substrate for many ABC transporters, but seems not to transport azoles. The sequence is that of ABC multidrug transporter H from Aspergillus fumigatus (strain ATCC MYA-4609 / CBS 101355 / FGSC A1100 / Af293) (Neosartorya fumigata).